A 158-amino-acid polypeptide reads, in one-letter code: Small ribosomal subunit protein uS7 (158 aa).

This sequence belongs to the universal ribosomal protein uS7 family. Part of the 30S ribosomal subunit. Contacts proteins S9 and S11.

One of the primary rRNA binding proteins, it binds directly to 16S rRNA where it nucleates assembly of the head domain of the 30S subunit. Is located at the subunit interface close to the decoding center, probably blocks exit of the E-site tRNA. This chain is Small ribosomal subunit protein uS7, found in Phocaeicola vulgatus (strain ATCC 8482 / DSM 1447 / JCM 5826 / CCUG 4940 / NBRC 14291 / NCTC 11154) (Bacteroides vulgatus).